Here is a 1007-residue protein sequence, read N- to C-terminus: RNA-binding protein 26 (1007 aa).

Residue lysine 94 forms a Glycyl lysine isopeptide (Lys-Gly) (interchain with G-Cter in SUMO2) linkage. A Glycyl lysine isopeptide (Lys-Gly) (interchain with G-Cter in SUMO1); alternate cross-link involves residue lysine 106. Residue lysine 106 forms a Glycyl lysine isopeptide (Lys-Gly) (interchain with G-Cter in SUMO2); alternate linkage. Over residues 106–118 (KKEEITKEEEREK) the composition is skewed to basic and acidic residues. The disordered stretch occupies residues 106–241 (KKEEITKEEE…YTPVSSVPSI (136 aa)). The residue at position 127 (serine 127) is a Phosphoserine. Residues 134-168 (RYRENRSRDERKKDDRSRKRDYDRNPPRRDSYRDR) show a composition bias toward basic and acidic residues. The segment covering 169 to 186 (YNRRRGRSRSYSRSRSRS) has biased composition (basic residues). Composition is skewed to basic and acidic residues over residues 187 to 201 (WSKE…DRSR) and 209 to 227 (RSRE…RTDP). The span at 228-241 (LENNYTPVSSVPSI) shows a compositional bias: polar residues. A C3H1-type zinc finger spans residues 288-316 (PMPKKRCRDYDEKGFCMRGDMCPFDHGSD). A compositionally biased stretch (pro residues) spans 334-388 (QPPVVEGPPPPGLPPPPPILTPPPVNLRPPVPPPGPLPPSLPPVTGPPPPLPPLQ). 2 disordered regions span residues 334–404 (QPPV…SSVP) and 460–519 (IGLT…TNSP). Residues 394–404 (APPNSATSSVP) show a composition bias toward low complexity. Position 496 is a phosphoserine (serine 496). An N6-acetyllysine modification is found at lysine 510. Residue serine 518 is modified to Phosphoserine. The RRM 1 domain maps to 532 to 606 (TKLELRKVPP…RFIKVYWHRE (75 aa)). Serine 616 carries the phosphoserine modification. Coiled coils occupy residues 719 to 795 (DNNE…KAAS) and 823 to 847 (KKMQ…EAAK). The disordered stretch occupies residues 853–884 (SGRGRGIHSRGRGAVHGRGRGRGRGRGVPGHA). Positions 857-877 (RGIHSRGRGAVHGRGRGRGRG) are enriched in basic residues. Positions 891–960 (RALEISAFTE…QDLKLAWNKP (70 aa)) constitute an RRM 2 domain. The disordered stretch occupies residues 966 to 1007 (AVETEEVEPDEEEFQEESLVDDSLLQDDDEEEEDNESRSWRR). Residues 968–1000 (ETEEVEPDEEEFQEESLVDDSLLQDDDEEEEDN) show a composition bias toward acidic residues.

May be involved in the turnover of nuclear polyadenylated (pA+) RNA. This chain is RNA-binding protein 26, found in Homo sapiens (Human).